The primary structure comprises 148 residues: Large ribosomal subunit protein bL9 (148 aa).

The protein belongs to the bacterial ribosomal protein bL9 family.

In terms of biological role, binds to the 23S rRNA. The protein is Large ribosomal subunit protein bL9 of Caldicellulosiruptor saccharolyticus (strain ATCC 43494 / DSM 8903 / Tp8T 6331).